The following is a 215-amino-acid chain: Protein Thf1 (215 aa).

A coiled-coil region spans residues 182–213 (ERMDQAVELVEETIAAEKRKKERRLEEQAQRT).

The protein belongs to the THF1 family.

May be involved in photosynthetic membrane biogenesis. The sequence is that of Protein Thf1 from Synechococcus sp. (strain CC9605).